Here is a 572-residue protein sequence, read N- to C-terminus: Proline--tRNA ligase (572 aa).

The protein belongs to the class-II aminoacyl-tRNA synthetase family. ProS type 1 subfamily. Homodimer.

The protein localises to the cytoplasm. The enzyme catalyses tRNA(Pro) + L-proline + ATP = L-prolyl-tRNA(Pro) + AMP + diphosphate. Functionally, catalyzes the attachment of proline to tRNA(Pro) in a two-step reaction: proline is first activated by ATP to form Pro-AMP and then transferred to the acceptor end of tRNA(Pro). As ProRS can inadvertently accommodate and process non-cognate amino acids such as alanine and cysteine, to avoid such errors it has two additional distinct editing activities against alanine. One activity is designated as 'pretransfer' editing and involves the tRNA(Pro)-independent hydrolysis of activated Ala-AMP. The other activity is designated 'posttransfer' editing and involves deacylation of mischarged Ala-tRNA(Pro). The misacylated Cys-tRNA(Pro) is not edited by ProRS. The protein is Proline--tRNA ligase of Bacillus licheniformis (strain ATCC 14580 / DSM 13 / JCM 2505 / CCUG 7422 / NBRC 12200 / NCIMB 9375 / NCTC 10341 / NRRL NRS-1264 / Gibson 46).